We begin with the raw amino-acid sequence, 647 residues long: Replication protein E1 (647 aa).

Residues 86–88 carry the Nuclear localization signal motif; it reads KRK. At serine 92 the chain carries Phosphoserine; by host. The disordered stretch occupies residues 154–186; that stretch reads TNGDAEGEHGGSVREECSSVDSAIDSENQDPKS. The span at 159-170 shows a compositional bias: basic and acidic residues; that stretch reads EGEHGGSVREEC. Residues 183–349 form a DNA-binding region region; the sequence is DPKSPTAQIK…LTVIQHGIDD (167 aa). One can recognise an SF3 helicase domain in the interval 448–598; the sequence is IEFISFLCAL…FPFDQNRNPV (151 aa). 474-481 provides a ligand contact to ATP; the sequence is GPANTGKS. Lysine 555 is covalently cross-linked (Glycyl lysine isopeptide (Lys-Gly) (interchain with G-Cter in SUMO)).

The protein belongs to the papillomaviridae E1 protein family. Can form hexamers. Interacts with E2 protein; this interaction increases E1 DNA binding specificity. Interacts with host DNA polymerase subunit POLA2. Interacts with host single stranded DNA-binding protein RPA1. Interacts with host TOP1; this interaction stimulates the enzymatic activity of TOP1. Phosphorylated. Post-translationally, sumoylated.

The protein localises to the host nucleus. It catalyses the reaction Couples ATP hydrolysis with the unwinding of duplex DNA by translocating in the 3'-5' direction.. It carries out the reaction ATP + H2O = ADP + phosphate + H(+). Functionally, ATP-dependent DNA 3'-5' helicase required for initiation of viral DNA replication. It forms a complex with the viral E2 protein. The E1-E2 complex binds to the replication origin which contains binding sites for both proteins. During the initial step, a dimer of E1 interacts with a dimer of protein E2 leading to a complex that binds the viral origin of replication with high specificity. Then, a second dimer of E1 displaces the E2 dimer in an ATP-dependent manner to form the E1 tetramer. Following this, two E1 monomers are added to each half of the site, which results in the formation of two E1 trimers on the viral ori. Subsequently, two hexamers will be created. The double hexamer acts as a bi-directional helicase machinery and unwinds the viral DNA and then recruits the host DNA polymerase to start replication. The protein is Replication protein E1 of Human papillomavirus 39.